The chain runs to 81 residues: Photosystem I iron-sulfur center (81 aa).

2 4Fe-4S ferredoxin-type domains span residues 2–31 (SHTV…MAPW) and 39–68 (VASA…VRVY). [4Fe-4S] cluster contacts are provided by cysteine 11, cysteine 14, cysteine 17, cysteine 21, cysteine 48, cysteine 51, cysteine 54, and cysteine 58.

As to quaternary structure, the eukaryotic PSI reaction center is composed of at least 11 subunits. It depends on [4Fe-4S] cluster as a cofactor.

The protein resides in the plastid. It is found in the chloroplast thylakoid membrane. It carries out the reaction reduced [plastocyanin] + hnu + oxidized [2Fe-2S]-[ferredoxin] = oxidized [plastocyanin] + reduced [2Fe-2S]-[ferredoxin]. Its function is as follows. Apoprotein for the two 4Fe-4S centers FA and FB of photosystem I (PSI); essential for photochemical activity. FB is the terminal electron acceptor of PSI, donating electrons to ferredoxin. The C-terminus interacts with PsaA/B/D and helps assemble the protein into the PSI complex. Required for binding of PsaD and PsaE to PSI. PSI is a plastocyanin/cytochrome c6-ferredoxin oxidoreductase, converting photonic excitation into a charge separation, which transfers an electron from the donor P700 chlorophyll pair to the spectroscopically characterized acceptors A0, A1, FX, FA and FB in turn. The sequence is that of Photosystem I iron-sulfur center from Tupiella akineta (Green alga).